The primary structure comprises 680 residues: Putative cyclin-dependent serine/threonine-protein kinase DDB_G0272797/DDB_G0274007 (680 aa).

The region spanning 4–381 is the Protein kinase domain; that stretch reads YIILSKCGQG…SLEALEHPWF (378 aa). Residues 10-18 and Lys-33 each bind ATP; that span reads CGQGTYGSV. Asp-125 (proton acceptor) is an active-site residue. Disordered stretches follow at residues 243–299, 409–444, 483–507, and 597–680; these read QQQQ…LQSP, RQLQQQQHHHQQQQQQQQQQQQQQQPHQQQLIQRQH, LAQHQQYNSQQHQQHHQQQHQQHQQ, and QQQQ…KSNG. Positions 257-286 are enriched in low complexity; that stretch reads NNNNNNNNNNNNNNNNNNNNNNNNNNNNNN. Residues 287-297 are compositionally biased toward polar residues; that stretch reads KYNNISTSCLQ. 3 stretches are compositionally biased toward low complexity: residues 410–444, 483–494, and 597–616; these read QLQQQQHHHQQQQQQQQQQQQQQQPHQQQLIQRQH, LAQHQQYNSQQH, and QQQQHQYQPPQQYNHQPPQH. Over residues 617–631 the composition is skewed to basic residues; sequence QHQHQHQHQHQHQHQ. A compositionally biased stretch (low complexity) spans 632-642; that stretch reads HQPQPQHQHQP. The segment covering 643–655 has biased composition (pro residues); the sequence is QPQPQPTPTPTPT. The segment covering 656-680 has biased composition (low complexity); sequence STPTTTTIPPTITTTIQPTISKSNG.

It belongs to the protein kinase superfamily. CMGC Ser/Thr protein kinase family. CDC2/CDKX subfamily.

It carries out the reaction L-seryl-[protein] + ATP = O-phospho-L-seryl-[protein] + ADP + H(+). The enzyme catalyses L-threonyl-[protein] + ATP = O-phospho-L-threonyl-[protein] + ADP + H(+). The polypeptide is Putative cyclin-dependent serine/threonine-protein kinase DDB_G0272797/DDB_G0274007 (Dictyostelium discoideum (Social amoeba)).